A 174-amino-acid polypeptide reads, in one-letter code: RNA pyrophosphohydrolase (174 aa).

Residues 14-167 (PYRPCVGLMV…KRKVYEEVVA (154 aa)) form the Nudix hydrolase domain. The Nudix box signature appears at 55-76 (GGIDKGEEPLEAAIRELYEETG).

The protein belongs to the Nudix hydrolase family. RppH subfamily. A divalent metal cation is required as a cofactor.

Accelerates the degradation of transcripts by removing pyrophosphate from the 5'-end of triphosphorylated RNA, leading to a more labile monophosphorylated state that can stimulate subsequent ribonuclease cleavage. This chain is RNA pyrophosphohydrolase, found in Brucella anthropi (strain ATCC 49188 / DSM 6882 / CCUG 24695 / JCM 21032 / LMG 3331 / NBRC 15819 / NCTC 12168 / Alc 37) (Ochrobactrum anthropi).